Reading from the N-terminus, the 139-residue chain is Small ribosomal subunit protein uS11 (139 aa).

2 disordered regions span residues 1–33 and 118–139; these read MPPA…AAHI and GAIS…RRRV. Over residues 14-23 the composition is skewed to basic residues; the sequence is KGQKTRRREK.

This sequence belongs to the universal ribosomal protein uS11 family. Part of the 30S ribosomal subunit. Interacts with proteins S7 and S18. Binds to IF-3.

Functionally, located on the platform of the 30S subunit, it bridges several disparate RNA helices of the 16S rRNA. Forms part of the Shine-Dalgarno cleft in the 70S ribosome. The protein is Small ribosomal subunit protein uS11 of Mycobacterium tuberculosis (strain ATCC 25177 / H37Ra).